The primary structure comprises 340 residues: Probable D,D-dipeptide transport system permease protein DdpB (340 aa).

Over 1-11 the chain is Periplasmic; it reads MTFWSILRQRC. The helical transmembrane segment at 12-32 threads the bilayer; sequence WGLVLVVAGVCVITFIISHLI. Residues 33 to 104 are Cytoplasmic-facing; sequence PGDPARLLAG…IFFPATLELA (72 aa). In terms of domain architecture, ABC transmembrane type-1 spans 97-327; sequence FPATLELAFG…LVNLVVDLLY (231 aa). Residues 105-125 form a helical membrane-spanning segment; that stretch reads FGALLLALLIGIPLGILSAVW. The Periplasmic portion of the chain corresponds to 126-135; that stretch reads RNRWLDHLVR. The chain crosses the membrane as a helical span at residues 136 to 156; the sequence is IMAITGISTPAFWLGLGVIVL. Topologically, residues 157–199 are cytoplasmic; sequence FYGHLQILPGGGRLDDWLDPPTHVTGFYLLDALLEGNGEVFFN. A helical transmembrane segment spans residues 200–220; that stretch reads ALQHLILPALTLAFVHLGIVA. Residues 221–246 are Periplasmic-facing; it reads RQIRSAMLEQLSEDYIRTARASGLPG. A helical membrane pass occupies residues 247–269; it reads WYIVLCYALPNALIPSITVLGLA. Over 270–279 the chain is Cytoplasmic; the sequence is LGDLLYGAVL. Residues 280–300 form a helical membrane-spanning segment; the sequence is TETVFAWPGMGAWVVTSIQAL. A topological domain (periplasmic) is located at residue Asp-301. A helical membrane pass occupies residues 302 to 322; the sequence is FPAVMGFAVVVSFAYVLVNLV. The Cytoplasmic segment spans residues 323 to 340; that stretch reads VDLLYLWIDPRIGRGGGE.

It belongs to the binding-protein-dependent transport system permease family. OppBC subfamily. The complex is composed of two ATP-binding proteins (DdpD and DdpF), two transmembrane proteins (DdpB and DdpC) and a solute-binding protein (DdpA).

The protein resides in the cell inner membrane. Functionally, part of the ABC transporter complex DdpABCDF, which is probably involved in D,D-dipeptide transport. Probably responsible for the translocation of the substrate across the membrane. The chain is Probable D,D-dipeptide transport system permease protein DdpB (ddpB) from Escherichia coli (strain K12).